Reading from the N-terminus, the 1342-residue chain is MVYSYTEKKRIRKSFGKRPQVLNVPYLLTIQLDSFDKFIQRDPDGQQGLEAAFRSIFPIVSNNGNTELQYVSYQLGEPVFDVRECQIRGTTYAASLRVKLRLVSYDKDAASGTIKDIKEQEVYMGEIPLMTSNGTFVINGTERVVVSQLHRSPGVFFDSDKGKTHSSGKVLYNARIIPYRGSWLDFEFDPKDNLYARIDRRRKLPATIILRALNYTTEEILDLFFDKVSFEIKDNKLLMTLVPERLRGETASFDIEANGKVYIERGRRITARHIKALEKDKITQVEVPTEYIVGKVSAKDYVDLTTGEIICPANMEISLELLEKLSQAGYKNIETLFTNDLDFGPYISETLRVDPSYDRLSALVEIYRMMRPGEPPTKEAAEGLFDNLFFSSERYDLSAVGRMKFNRSLGIEDTTGSGTLSKEDIVNVMRKLIDIRNGRGEVDDIDHLGNRRIRSVGEMAENQFRIGLVRVERAVKERLSLGDLESVTPQDLINAKPISAAVKEFFGSSQLSQFMDQNNPLSEVTHKRRISALGPGGLTRERAGFEVRDVHATHYGRVCPIETPEGPNIGLINSLSVYARTNDYGFLETPYRKVVNGQVTEEIEYLSAIEEGKYVIAQANSNLDNELRFTDAFVTCRGEHGESGLYRPEEIHYMDVSTQQVVSVAAALIPFLEHDDANRALMGANMQRQAVPTLRADKPLVGTGMEKPVALDSGVAVVAKRGGTIQYVDASRIVVKVNEDETIAGEAGIDIYNLIKYTRSNQNTCINQIPCVQLGEPIERGEILADGPSTDLGELALGQNMRVAFMPWNGYNFEDSMLVSERVVQEDRFTTIHIQELSCVARDTKLGSEEITADIPNVGEAALSKLDESGIVYIGAEVKGGDILVGKVTPKGETQLTPEEKLLRAIFGEKASDVKDSSLRVPNGTSGTVIDVQVFTRDGVEKDKRALEIEEMQLKQAKKDLVEELEILEAGLFARVRNLLLSGGFNDKQLENLDRTQWLEQTLVDEDKQNQLEQLAEQYEELRKDFEHKLEIKRSKIIQGDDLAPGVLKVVKVYLAVKRQIQPGDKMAGRHGNKGVISKINPVEDMPYDENGQPVDIVLNPLGVPSRMNIGQILETHLGLAAKGIGDQINAMIKQKQDVEKLRGYIQKAYDLGDGSQKVDLSTFTDEEVLRLAKNLRKGMPLATPVFDGAHEKEIKALLELGGLPTSGQIILFDGRTGEKFERPVTVGYMYMLKLNHLVDDKMHARSTGSYSLVTQQPLGGKAQFGGQRFGEMEVWALEAYGAAYTLQEMLTVKSDDVNGRTKMYKNIVGGTHQMDPGTPESFNVIMKEIRSLGINIDLDEE.

It belongs to the RNA polymerase beta chain family. As to quaternary structure, the RNAP catalytic core consists of 2 alpha, 1 beta, 1 beta' and 1 omega subunit. When a sigma factor is associated with the core the holoenzyme is formed, which can initiate transcription.

The enzyme catalyses RNA(n) + a ribonucleoside 5'-triphosphate = RNA(n+1) + diphosphate. Functionally, DNA-dependent RNA polymerase catalyzes the transcription of DNA into RNA using the four ribonucleoside triphosphates as substrates. The polypeptide is DNA-directed RNA polymerase subunit beta (Histophilus somni (strain 2336) (Haemophilus somnus)).